A 248-amino-acid polypeptide reads, in one-letter code: Small ribosomal subunit protein uS2c (248 aa).

The protein belongs to the universal ribosomal protein uS2 family.

The protein resides in the plastid. The protein localises to the chloroplast. This chain is Small ribosomal subunit protein uS2c (rps2), found in Trachelium caeruleum (Blue throatwort).